The chain runs to 96 residues: UPF0251 protein Spea_3639 (96 aa).

This sequence belongs to the UPF0251 family.

This chain is UPF0251 protein Spea_3639, found in Shewanella pealeana (strain ATCC 700345 / ANG-SQ1).